The following is a 215-amino-acid chain: Large ribosomal subunit protein uL4 (215 aa).

Residues 43–97 (RRQGTHSTKTRAEVSGGGKKPWRQKGTGRARAGSTRSPIWVGGGKTHTPKPRDYS) form a disordered region.

This sequence belongs to the universal ribosomal protein uL4 family. Part of the 50S ribosomal subunit.

One of the primary rRNA binding proteins, this protein initially binds near the 5'-end of the 23S rRNA. It is important during the early stages of 50S assembly. It makes multiple contacts with different domains of the 23S rRNA in the assembled 50S subunit and ribosome. Its function is as follows. Forms part of the polypeptide exit tunnel. This chain is Large ribosomal subunit protein uL4, found in Brachyspira hyodysenteriae (strain ATCC 49526 / WA1).